A 203-amino-acid polypeptide reads, in one-letter code: Nucleoside triphosphate pyrophosphatase (203 aa).

Residue Asp77 is the Proton acceptor of the active site.

The protein belongs to the Maf family. The cofactor is a divalent metal cation.

It localises to the cytoplasm. It catalyses the reaction a ribonucleoside 5'-triphosphate + H2O = a ribonucleoside 5'-phosphate + diphosphate + H(+). The catalysed reaction is a 2'-deoxyribonucleoside 5'-triphosphate + H2O = a 2'-deoxyribonucleoside 5'-phosphate + diphosphate + H(+). Its function is as follows. Nucleoside triphosphate pyrophosphatase. May have a dual role in cell division arrest and in preventing the incorporation of modified nucleotides into cellular nucleic acids. This chain is Nucleoside triphosphate pyrophosphatase, found in Rickettsia felis (strain ATCC VR-1525 / URRWXCal2) (Rickettsia azadi).